The sequence spans 223 residues: MSILNFNKLIDHTNLKANATYEEIERLCHEAIEYGFFSVCVNPAYIRTAKKILLKSPVKVCTVVDFPLGQTFSEQKVYEAKTSIKMGADEIDMVINIPELINGCACVIDEIRQVKKVCGEKILKVIVETALLNEEQIRKATLACIDGGADFIKTSTGFSTRGASLNDIKIMQQASQNKILIKASGGISTARELIEFVKVGADRIGTSRSVKLMQELKTMDLAK.

D92 functions as the Proton donor/acceptor in the catalytic mechanism. K153 (schiff-base intermediate with acetaldehyde) is an active-site residue. The Proton donor/acceptor role is filled by K182.

This sequence belongs to the DeoC/FbaB aldolase family. DeoC type 1 subfamily.

The protein localises to the cytoplasm. It carries out the reaction 2-deoxy-D-ribose 5-phosphate = D-glyceraldehyde 3-phosphate + acetaldehyde. It participates in carbohydrate degradation; 2-deoxy-D-ribose 1-phosphate degradation; D-glyceraldehyde 3-phosphate and acetaldehyde from 2-deoxy-alpha-D-ribose 1-phosphate: step 2/2. Catalyzes a reversible aldol reaction between acetaldehyde and D-glyceraldehyde 3-phosphate to generate 2-deoxy-D-ribose 5-phosphate. The sequence is that of Deoxyribose-phosphate aldolase from Mycoplasmoides gallisepticum (strain R(low / passage 15 / clone 2)) (Mycoplasma gallisepticum).